Consider the following 102-residue polypeptide: Aspartyl/glutamyl-tRNA(Asn/Gln) amidotransferase subunit C (102 aa).

This sequence belongs to the GatC family. Heterotrimer of A, B and C subunits.

The enzyme catalyses L-glutamyl-tRNA(Gln) + L-glutamine + ATP + H2O = L-glutaminyl-tRNA(Gln) + L-glutamate + ADP + phosphate + H(+). The catalysed reaction is L-aspartyl-tRNA(Asn) + L-glutamine + ATP + H2O = L-asparaginyl-tRNA(Asn) + L-glutamate + ADP + phosphate + 2 H(+). In terms of biological role, allows the formation of correctly charged Asn-tRNA(Asn) or Gln-tRNA(Gln) through the transamidation of misacylated Asp-tRNA(Asn) or Glu-tRNA(Gln) in organisms which lack either or both of asparaginyl-tRNA or glutaminyl-tRNA synthetases. The reaction takes place in the presence of glutamine and ATP through an activated phospho-Asp-tRNA(Asn) or phospho-Glu-tRNA(Gln). The chain is Aspartyl/glutamyl-tRNA(Asn/Gln) amidotransferase subunit C from Bordetella avium (strain 197N).